The chain runs to 417 residues: MLEQMGKQAKDAAFILAQLTTAEKNRALSIIAEQLEQQAPLILAENAKDIELAKQNELSDALIDRLLLTQERLQGIANDVRHVISLADPVGKIIDGGTLDSGLKIERVRTPLGVIGTIYEARPNVTIDVASLCLKTGNAVILRGGKETQFSNKILIEVVQNALEQAGLPKFAVQAITDPNRELVMQLLKLDRYVDMIIPRGGSDLHELCKQHSTIPVIVGGVGVCHTFVEESADQNKAIFVIDNAKTQRPSTCNTLETLLVQHSIAEEFLPKLVSHLSAKNVKYHAKSTALNILKQAGANVCEVTEKELRKEWGSLDLNVVVVEDIHAAIEHIRQYGTQHSESILTSSQNLARQFINQVDAAAVYVNASTRFTDGGQFGLGAEVAVSTQKLHARGPMGLEALTSYKWVCEGEYTVRK.

The protein belongs to the gamma-glutamyl phosphate reductase family.

It is found in the cytoplasm. The enzyme catalyses L-glutamate 5-semialdehyde + phosphate + NADP(+) = L-glutamyl 5-phosphate + NADPH + H(+). The protein operates within amino-acid biosynthesis; L-proline biosynthesis; L-glutamate 5-semialdehyde from L-glutamate: step 2/2. Catalyzes the NADPH-dependent reduction of L-glutamate 5-phosphate into L-glutamate 5-semialdehyde and phosphate. The product spontaneously undergoes cyclization to form 1-pyrroline-5-carboxylate. This Haemophilus influenzae (strain PittEE) protein is Gamma-glutamyl phosphate reductase.